The following is a 70-amino-acid chain: Conotoxin TsMLKM-011 (70 aa).

The N-terminal stretch at Met-1 to Ala-24 is a signal peptide. A propeptide spanning residues Asp-25 to Arg-54 is cleaved from the precursor. Disulfide bonds link Cys-56–Cys-66, Cys-57–Cys-68, and Cys-62–Cys-69.

This sequence belongs to the conotoxin M superfamily. As to expression, expressed by the venom duct.

The protein resides in the secreted. The protein is Conotoxin TsMLKM-011 of Conus tessulatus (Tessellate cone).